Consider the following 887-residue polypeptide: Inter-alpha-trypsin inhibitor heavy chain H3 (887 aa).

An N-terminal signal peptide occupies residues 1–21 (MVTLWWPCLVLALLSGLETSG). Residues 22–33 (FPRSPLRLLGKR) constitute a propeptide that is removed on maturation. The VIT domain maps to 29–158 (LLGKRSLPEG…KVIFELTYEE (130 aa)). N91 carries N-linked (GlcNAc...) asparagine glycosylation. Residues 282-442 (PKNIAFVIDV…YNFLESLALE (161 aa)) form the VWFA domain. N580 carries N-linked (GlcNAc...) asparagine glycosylation. D647 is subject to Aspartate 1-(chondroitin 4-sulfate)-ester. Positions 648–887 (PHFIIQVPGK…HTDYIVPSLF (240 aa)) are excised as a propeptide.

It belongs to the ITIH family. In terms of assembly, I-alpha-I plasma protease inhibitors are assembled from one or two heavy chains (HC) and one light chain, bikunin. Pre-alpha-inhibitor (P-alpha-I) is composed of ITIH3/HC3 and bikunin. Post-translationally, heavy chains are linked to bikunin via chondroitin 4-sulfate esterified to the alpha-carboxyl of the C-terminal aspartate after propeptide cleavage.

The protein resides in the secreted. May act as a carrier of hyaluronan in serum or as a binding protein between hyaluronan and other matrix protein, including those on cell surfaces in tissues to regulate the localization, synthesis and degradation of hyaluronan which are essential to cells undergoing biological processes. This chain is Inter-alpha-trypsin inhibitor heavy chain H3 (Itih3), found in Rattus norvegicus (Rat).